Here is a 295-residue protein sequence, read N- to C-terminus: 4-hydroxy-tetrahydrodipicolinate synthase (295 aa).

Thr-47 lines the pyruvate pocket. Residue Tyr-135 is the Proton donor/acceptor of the active site. Lys-163 functions as the Schiff-base intermediate with substrate in the catalytic mechanism. A pyruvate-binding site is contributed by Ile-204.

It belongs to the DapA family. As to quaternary structure, homotetramer; dimer of dimers.

Its subcellular location is the cytoplasm. The catalysed reaction is L-aspartate 4-semialdehyde + pyruvate = (2S,4S)-4-hydroxy-2,3,4,5-tetrahydrodipicolinate + H2O + H(+). The protein operates within amino-acid biosynthesis; L-lysine biosynthesis via DAP pathway; (S)-tetrahydrodipicolinate from L-aspartate: step 3/4. Its function is as follows. Catalyzes the condensation of (S)-aspartate-beta-semialdehyde [(S)-ASA] and pyruvate to 4-hydroxy-tetrahydrodipicolinate (HTPA). In Caldicellulosiruptor bescii (strain ATCC BAA-1888 / DSM 6725 / KCTC 15123 / Z-1320) (Anaerocellum thermophilum), this protein is 4-hydroxy-tetrahydrodipicolinate synthase.